The primary structure comprises 101 residues: Small ribosomal subunit protein uS14 (101 aa).

Belongs to the universal ribosomal protein uS14 family. As to quaternary structure, part of the 30S ribosomal subunit. Contacts proteins S3 and S10.

In terms of biological role, binds 16S rRNA, required for the assembly of 30S particles and may also be responsible for determining the conformation of the 16S rRNA at the A site. This is Small ribosomal subunit protein uS14 from Cupriavidus pinatubonensis (strain JMP 134 / LMG 1197) (Cupriavidus necator (strain JMP 134)).